Consider the following 637-residue polypeptide: Neurexin-3-beta (637 aa).

The first 35 residues, M1–S35, serve as a signal peptide directing secretion. The Extracellular segment spans residues S36 to T562. The span at S43–H52 shows a compositional bias: low complexity. Residues S43–H65 form a disordered region. Positions H55–H65 are enriched in basic residues. Positions A85–V255 constitute a Laminin G-like domain. Ca(2+) contacts are provided by D137 and I154. N-linked (GlcNAc...) asparagine glycosylation is present at N184. Residues I206 and N208 each coordinate Ca(2+). N-linked (GlcNAc...) asparagine glycans are attached at residues N252 and N296. The disordered stretch occupies residues A289–V310. Residues S298 to V310 are compositionally biased toward polar residues. O-linked (Xyl...) (heparan sulfate) serine glycosylation occurs at S312. The chain crosses the membrane as a helical span at residues G563–M583. Topologically, residues Y584–V637 are cytoplasmic. Residues N605–V637 form a disordered region.

The protein belongs to the neurexin family. Weakly interacts with CBLN1 and CBLN2. Very weak binding, if any, to CBLN4. Specific isoforms bind neuroligins NLGN1, NLGN2 and NLGN3. Interacts with CLSTN3. Processed by alpha-secretase leading to the formation of an extracellular soluble protein as well as a C-terminal membrane-embedded fragment (CTF). Proteolysis of these CTFs by gamma-secretase releases intracellular domains (ICDs) and extracellular peptides. In terms of processing, O-glycosylated; contains heparan sulfate. Heparan sulfate attachment is required for synapse development by mediating interactions with neuroligins. As to expression, expressed in the blood vessel walls (at protein level).

The protein localises to the presynaptic cell membrane. Functionally, neuronal cell surface protein that may be involved in cell recognition and cell adhesion. May mediate intracellular signaling. Functions as part of a trans-synaptic complex by binding to cerebellins and postsynaptic GRID1. This interaction helps regulate the activity of NMDA and AMPA receptors at hippocampal synapses without affecting synapse formation. NRXN3B-CBLN2-GRID1 complex transduce presynaptic signals into postsynaptic AMPAR response. In Homo sapiens (Human), this protein is Neurexin-3-beta.